A 467-amino-acid chain; its full sequence is Siroheme synthase 2 (467 aa).

Residues 1 to 204 form a precorrin-2 dehydrogenase /sirohydrochlorin ferrochelatase region; that stretch reads MDYLPIFCQL…NDVALAERQI (204 aa). Residues 22–23 and 43–44 each bind NAD(+); these read EI and CS. At S128 the chain carries Phosphoserine. A uroporphyrinogen-III C-methyltransferase region spans residues 216–467; sequence GEVVLVGAGP…EPSQPLAQMA (252 aa). Residue P225 coordinates S-adenosyl-L-methionine. D248 functions as the Proton acceptor in the catalytic mechanism. K270 serves as the catalytic Proton donor. Residues 301–303, I306, 331–332, M382, and G411 contribute to the S-adenosyl-L-methionine site; these read GGD and TA.

It in the N-terminal section; belongs to the precorrin-2 dehydrogenase / sirohydrochlorin ferrochelatase family. In the C-terminal section; belongs to the precorrin methyltransferase family.

It catalyses the reaction uroporphyrinogen III + 2 S-adenosyl-L-methionine = precorrin-2 + 2 S-adenosyl-L-homocysteine + H(+). The catalysed reaction is precorrin-2 + NAD(+) = sirohydrochlorin + NADH + 2 H(+). It carries out the reaction siroheme + 2 H(+) = sirohydrochlorin + Fe(2+). Its pathway is cofactor biosynthesis; adenosylcobalamin biosynthesis; precorrin-2 from uroporphyrinogen III: step 1/1. It functions in the pathway cofactor biosynthesis; adenosylcobalamin biosynthesis; sirohydrochlorin from precorrin-2: step 1/1. The protein operates within porphyrin-containing compound metabolism; siroheme biosynthesis; precorrin-2 from uroporphyrinogen III: step 1/1. It participates in porphyrin-containing compound metabolism; siroheme biosynthesis; siroheme from sirohydrochlorin: step 1/1. Its pathway is porphyrin-containing compound metabolism; siroheme biosynthesis; sirohydrochlorin from precorrin-2: step 1/1. In terms of biological role, multifunctional enzyme that catalyzes the SAM-dependent methylations of uroporphyrinogen III at position C-2 and C-7 to form precorrin-2 via precorrin-1. Then it catalyzes the NAD-dependent ring dehydrogenation of precorrin-2 to yield sirohydrochlorin. Finally, it catalyzes the ferrochelation of sirohydrochlorin to yield siroheme. The chain is Siroheme synthase 2 from Serratia proteamaculans (strain 568).